The sequence spans 667 residues: Heat shock protein DDB_G0283913 (667 aa).

2 helical membrane passes run Phe-2–Leu-22 and Met-224–Leu-244. Residues Ile-18 to Ile-82 adopt a coiled-coil conformation. Residues Ile-432–Ala-478 are disordered. Residues Ser-444–Ser-457 show a composition bias toward low complexity. Positions Ile-463–Glu-477 are enriched in basic and acidic residues. The sHSP domain occupies Met-551–Gly-667.

This sequence belongs to the small heat shock protein (HSP20) family.

It is found in the membrane. The chain is Heat shock protein DDB_G0283913 from Dictyostelium discoideum (Social amoeba).